The chain runs to 823 residues: Ciliated left-right organizer ZP-N domains-containing protein (823 aa).

A signal peptide spans 1–22; that stretch reads MWGSPALAWAVWLACVQPTVFP. Disordered regions lie at residues 206 to 242, 269 to 422, 434 to 520, and 632 to 656; these read MGLY…LLPL, LVHI…DLLH, GPFL…SPSP, and LPRE…EGPG. The segment covering 216–230 has biased composition (pro residues); it reads TVTVQSPRQGLLQRW. Over residues 389 to 402 the composition is skewed to low complexity; sequence GPETPPAGVPPAAS.

The protein localises to the secreted. Functionally, plays a role in left-right patterning process. In Homo sapiens (Human), this protein is Ciliated left-right organizer ZP-N domains-containing protein.